The sequence spans 521 residues: D-aminoacyl-tRNA deacylase (521 aa).

2 disordered regions span residues 323-353 (AVGT…SEDS) and 499-521 (VFST…SSSS). Positions 343 to 353 (VDAERTESEDS) are enriched in basic and acidic residues. Over residues 501–521 (STSSSSSSSSSSSSSSSSSSS) the composition is skewed to low complexity.

Belongs to the DtdA deacylase family. In terms of assembly, monomer. It depends on Zn(2+) as a cofactor.

It catalyses the reaction a D-aminoacyl-tRNA + H2O = a tRNA + a D-alpha-amino acid + H(+). It carries out the reaction glycyl-tRNA(Ala) + H2O = tRNA(Ala) + glycine + H(+). In terms of biological role, D-aminoacyl-tRNA deacylase with broad substrate specificity. By recycling D-aminoacyl-tRNA to D-amino acids and free tRNA molecules, this enzyme counteracts the toxicity associated with the formation of D-aminoacyl-tRNA entities in vivo. The sequence is that of D-aminoacyl-tRNA deacylase from Haloquadratum walsbyi (strain DSM 16790 / HBSQ001).